Here is an 873-residue protein sequence, read N- to C-terminus: Probable beta-glucosidase A (873 aa).

Residues 1–19 (MRFGWLEVAALTAASVANA) form the signal peptide. N-linked (GlcNAc...) asparagine glycans are attached at residues Asn71, Asn222, and Asn263. The active site involves Asp291. Residues Asn326, Asn333, Asn365, Asn453, Asn534, Asn553, Asn575, Asn679, and Asn725 are each glycosylated (N-linked (GlcNAc...) asparagine). The disordered stretch occupies residues 731 to 764 (DSSDDPNYGWQDSEYIPEGARDGSPQPLLKAGGA).

It belongs to the glycosyl hydrolase 3 family.

It is found in the secreted. The catalysed reaction is Hydrolysis of terminal, non-reducing beta-D-glucosyl residues with release of beta-D-glucose.. It functions in the pathway glycan metabolism; cellulose degradation. Its function is as follows. Beta-glucosidases are one of a number of cellulolytic enzymes involved in the degradation of cellulosic biomass. Catalyzes the last step releasing glucose from the inhibitory cellobiose. The chain is Probable beta-glucosidase A (bglA) from Aspergillus fumigatus (strain ATCC MYA-4609 / CBS 101355 / FGSC A1100 / Af293) (Neosartorya fumigata).